A 341-amino-acid chain; its full sequence is Glucokinase (341 aa).

G18–T23 is an ATP binding site.

The protein belongs to the bacterial glucokinase family.

The protein resides in the cytoplasm. The catalysed reaction is D-glucose + ATP = D-glucose 6-phosphate + ADP + H(+). This is Glucokinase from Rhizobium etli (strain CIAT 652).